Here is a 425-residue protein sequence, read N- to C-terminus: uncharacterized protein (425 aa).

The next 12 helical transmembrane spans lie at 15 to 35, 48 to 68, 84 to 104, 107 to 127, 149 to 169, 174 to 194, 225 to 245, 271 to 291, 295 to 315, 331 to 351, 370 to 390, and 395 to 415; these read LICA…SQML, LIGA…WAPL, MLLS…FDPL, LGTV…QDIV, INAY…LAAI, TVFL…LFLA, VIQA…DSFA, ALWS…KLGI, LWLF…LAAF, VVIA…VAFM, LSAL…GAVG, and FWFC…VAPL.

To E.coli AmpG and yeast YBR220c.

Its subcellular location is the cell inner membrane. This is an uncharacterized protein from Haemophilus influenzae (strain ATCC 51907 / DSM 11121 / KW20 / Rd).